The following is a 353-amino-acid chain: F-box protein At3g58530 (353 aa).

One can recognise an F-box; degenerate domain in the interval 8–56 (EEEEETWRREIVTSVMRLVSTRLPQTDLISLLLVSPWLYRTLISYPSIW).

In Arabidopsis thaliana (Mouse-ear cress), this protein is F-box protein At3g58530.